The sequence spans 368 residues: Putative F-box/kelch-repeat protein At5g02995 (368 aa).

One can recognise an F-box domain in the interval 35–84; sequence SLYWNDPTEDCVWNCLARISRFHYPTLSLVSKGFRSLIASPELEATRSFI. Kelch repeat units lie at residues 140–186 and 187–233; these read DIYI…IVDK and KIYV…VSGG.

The chain is Putative F-box/kelch-repeat protein At5g02995 from Arabidopsis thaliana (Mouse-ear cress).